The primary structure comprises 82 residues: MKLLMLIVALMIIGVQSKDGYPMDHKGCKISCVINNKYCETECVTVLKGKKGYCYFWKLACYCEGLPNWAKVWDRATNKCRA.

An N-terminal signal peptide occupies residues 1–17; the sequence is MKLLMLIVALMIIGVQS. Positions 18-81 constitute an LCN-type CS-alpha/beta domain; that stretch reads KDGYPMDHKG…VWDRATNKCR (64 aa). 4 cysteine pairs are disulfide-bonded: Cys28–Cys80, Cys32–Cys54, Cys39–Cys61, and Cys43–Cys63.

It belongs to the long (4 C-C) scorpion toxin superfamily. Sodium channel inhibitor family. Beta subfamily. In terms of tissue distribution, expressed by the venom gland.

The protein localises to the secreted. Functionally, beta toxins bind voltage-independently at site-4 of sodium channels (Nav) and shift the voltage of activation toward more negative potentials thereby affecting sodium channel activation and promoting spontaneous and repetitive firing. This toxin compete with high affinity with 125I-Css4 bound on rat brain synaptosome and may bind with high affinity to Nav1.1/SCN1A, Nav1.2/SCN2A and Nav1.6/SCN8A. The sequence is that of Beta-neurotoxin Css9 from Centruroides suffusus (Durango bark scorpion).